Here is a 1275-residue protein sequence, read N- to C-terminus: O-antigen biosynthesis protein RfbC (1275 aa).

Functionally, involved in O-antigen biosynthesis. This chain is O-antigen biosynthesis protein RfbC (rfbC), found in Myxococcus xanthus.